A 452-amino-acid polypeptide reads, in one-letter code: UDP-N-acetylmuramoylalanine--D-glutamate ligase (452 aa).

An ATP-binding site is contributed by 119–125 (GSNGKTT).

This sequence belongs to the MurCDEF family.

Its subcellular location is the cytoplasm. It carries out the reaction UDP-N-acetyl-alpha-D-muramoyl-L-alanine + D-glutamate + ATP = UDP-N-acetyl-alpha-D-muramoyl-L-alanyl-D-glutamate + ADP + phosphate + H(+). The protein operates within cell wall biogenesis; peptidoglycan biosynthesis. Cell wall formation. Catalyzes the addition of glutamate to the nucleotide precursor UDP-N-acetylmuramoyl-L-alanine (UMA). This is UDP-N-acetylmuramoylalanine--D-glutamate ligase from Streptococcus pyogenes serotype M4 (strain MGAS10750).